We begin with the raw amino-acid sequence, 450 residues long: Cell division cycle 20.5, cofactor of APC complex (450 aa).

WD repeat units follow at residues 129 to 166, 171 to 210, 214 to 251, 255 to 294, 304 to 346, 348 to 389, and 392 to 431; these read ADDFYLNLLDWGSSNVLAIALGDTVYLWDASSGSTYKL, EEEGPVTSINWTQDGLDLAIGLDNSEVQLWDCVSNRQVRT, GHESRVGSLAWNNHILTTGGMDGKIVNNDVRIRSSIVE, GHTEEVCGLKWSESGKKLASGGNDNVVHIWDHRSVASSNP, EHTA…CLNS, ETGS…KMAE, and GHTSRVLFMAQSPDGCTVASAAGDETLRLWNVFGEPPKTT.

It belongs to the WD repeat CDC20/Fizzy family. In terms of assembly, the APC/C is composed of at least 11 subunits that stay tightly associated throughout the cell cycle. Binds to GIG1 and PYM. Part of the mitotic checkpoint complex (MCC); interacts with MAD2 and BUB1.

The protein localises to the nucleus. It functions in the pathway protein modification; protein ubiquitination. Component of the anaphase promoting complex/cyclosome (APC/C), a cell cycle-regulated E3 ubiquitin-protein ligase complex that controls progression through mitosis and the G1 phase of the cell cycle. The polypeptide is Cell division cycle 20.5, cofactor of APC complex (CDC20-5) (Arabidopsis thaliana (Mouse-ear cress)).